Here is a 329-residue protein sequence, read N- to C-terminus: Coiled-coil domain-containing protein 54 (329 aa).

Positions 86-149 form a coiled coil; sequence NIVSSISNIQ…VTELESQNSY (64 aa). Residues 178 to 191 are compositionally biased toward polar residues; that stretch reads TPKGTATSPDTVIS. Residues 178 to 214 are disordered; the sequence is TPKGTATSPDTVISSAEPERVSSYPEPTGELKKKTTS. Threonine 182 is modified (phosphothreonine).

In Mus musculus (Mouse), this protein is Coiled-coil domain-containing protein 54 (Ccdc54).